The following is a 318-amino-acid chain: L-carnitine dehydrogenase (318 aa).

14–19 (GSGVIG) contacts NAD(+).

Belongs to the 3-hydroxyacyl-CoA dehydrogenase family. L-carnitine dehydrogenase subfamily. As to quaternary structure, homodimer.

Its subcellular location is the cytoplasm. It catalyses the reaction carnitine + NAD(+) = 3-dehydrocarnitine + NADH + H(+). The protein operates within amine and polyamine metabolism; carnitine metabolism. Functionally, catalyzes the NAD(+)-dependent oxidation of L-carnitine to 3-dehydrocarnitine. The sequence is that of L-carnitine dehydrogenase from Pseudomonas syringae pv. syringae (strain B728a).